A 288-amino-acid polypeptide reads, in one-letter code: Nucleotide-binding protein NE1849 (288 aa).

G8–S15 is a binding site for ATP. D57–S60 serves as a coordination point for GTP.

It belongs to the RapZ-like family.

In terms of biological role, displays ATPase and GTPase activities. The polypeptide is Nucleotide-binding protein NE1849 (Nitrosomonas europaea (strain ATCC 19718 / CIP 103999 / KCTC 2705 / NBRC 14298)).